Here is a 260-residue protein sequence, read N- to C-terminus: 4-hydroxy-tetrahydrodipicolinate reductase (260 aa).

NAD(+) is bound by residues 12 to 17, 92 to 94, and 118 to 121; these read GFRGKM, GTT, and APNF. Histidine 148 (proton donor/acceptor) is an active-site residue. Histidine 149 contacts (S)-2,3,4,5-tetrahydrodipicolinate. The active-site Proton donor is lysine 152. Residue 158 to 159 participates in (S)-2,3,4,5-tetrahydrodipicolinate binding; sequence GT.

It belongs to the DapB family.

Its subcellular location is the cytoplasm. It catalyses the reaction (S)-2,3,4,5-tetrahydrodipicolinate + NAD(+) + H2O = (2S,4S)-4-hydroxy-2,3,4,5-tetrahydrodipicolinate + NADH + H(+). It carries out the reaction (S)-2,3,4,5-tetrahydrodipicolinate + NADP(+) + H2O = (2S,4S)-4-hydroxy-2,3,4,5-tetrahydrodipicolinate + NADPH + H(+). It functions in the pathway amino-acid biosynthesis; L-lysine biosynthesis via DAP pathway; (S)-tetrahydrodipicolinate from L-aspartate: step 4/4. Catalyzes the conversion of 4-hydroxy-tetrahydrodipicolinate (HTPA) to tetrahydrodipicolinate. This Lactococcus lactis subsp. cremoris (strain SK11) protein is 4-hydroxy-tetrahydrodipicolinate reductase.